The following is a 197-amino-acid chain: UPF0301 protein A2cp1_4106 (197 aa).

This sequence belongs to the UPF0301 (AlgH) family.

This Anaeromyxobacter dehalogenans (strain 2CP-1 / ATCC BAA-258) protein is UPF0301 protein A2cp1_4106.